The sequence spans 272 residues: MTFRETVCATARRNRSWLCIGLDPEPMRMPVHLPADAEGVYAFCAAIMDATSDLVCAFKPNIAFFEAFGAAGWSALERLIRLRPGPPIILDAKRGDIGSTAEAYARAAFEVLDADAVTVNPYLGGDALEPFLRHSQRGCFILCKTSNPGSHDLQDMRLADGRPLYLAVAEMARDRWNMHGNTGLVVGATHPTAITEVRRACPDMLLLVPGIGAQGGDLDTTVRAAAAVDEPLMMINVSRTVLYADRGTNFAAAARTTALRLRDAINAALMAR.

The active-site Proton donor is the Lys-93.

It belongs to the OMP decarboxylase family. Type 2 subfamily.

It carries out the reaction orotidine 5'-phosphate + H(+) = UMP + CO2. It participates in pyrimidine metabolism; UMP biosynthesis via de novo pathway; UMP from orotate: step 2/2. The protein is Orotidine 5'-phosphate decarboxylase of Roseiflexus sp. (strain RS-1).